The chain runs to 232 residues: Putative dimethylsulfoniopropionate lyase DddL (232 aa).

Positions 154, 159, 161, and 190 each coordinate a divalent metal cation.

Belongs to the non-heme iron-dependent dioxygenase family. Homodimer. A divalent metal cation is required as a cofactor.

The catalysed reaction is S,S-dimethyl-beta-propiothetin = acrylate + dimethyl sulfide + H(+). In terms of biological role, may cleave dimethylsulfoniopropionate (DMSP), releasing dimethyl sulfide (DMS). DMS is the principal form by which sulfur is transported from oceans to the atmosphere. The real activity of the protein is however subject to debate and it is unclear whether it constitutes a real dimethylsulfoniopropionate lyase in vivo. The polypeptide is Putative dimethylsulfoniopropionate lyase DddL (dddL) (Cereibacter sphaeroides (strain ATCC 17023 / DSM 158 / JCM 6121 / CCUG 31486 / LMG 2827 / NBRC 12203 / NCIMB 8253 / ATH 2.4.1.) (Rhodobacter sphaeroides)).